The sequence spans 125 residues: Photosystem II extrinsic protein U (125 aa).

The signal sequence occupies residues 1–29 (MKRLLSWLTGLVVIAGLLIGLLVPPSVSA).

This sequence belongs to the PsbU family. As to quaternary structure, PSII is composed of 1 copy each of membrane proteins PsbA, PsbB, PsbC, PsbD, PsbE, PsbF, PsbH, PsbI, PsbJ, PsbK, PsbL, PsbM, PsbT, PsbX, PsbY, PsbZ, Psb30/Ycf12, peripheral proteins PsbO, CyanoQ (PsbQ), PsbU, PsbV and a large number of cofactors. It forms dimeric complexes.

Its subcellular location is the cellular thylakoid membrane. Functionally, one of the extrinsic, lumenal subunits of photosystem II (PSII). PSII is a light-driven water plastoquinone oxidoreductase, using light energy to abstract electrons from H(2)O, generating a proton gradient subsequently used for ATP formation. The extrinsic proteins stabilize the structure of photosystem II oxygen-evolving complex (OEC), the ion environment of oxygen evolution and protect the OEC against heat-induced inactivation. This chain is Photosystem II extrinsic protein U, found in Synechococcus sp. (strain CC9311).